The chain runs to 220 residues: Ribosomal RNA large subunit methyltransferase E (220 aa).

Residues Gly-60, Trp-62, Asp-92, Asp-108, and Asp-133 each contribute to the S-adenosyl-L-methionine site. The active-site Proton acceptor is the Lys-173.

This sequence belongs to the class I-like SAM-binding methyltransferase superfamily. RNA methyltransferase RlmE family.

It localises to the cytoplasm. It carries out the reaction uridine(2552) in 23S rRNA + S-adenosyl-L-methionine = 2'-O-methyluridine(2552) in 23S rRNA + S-adenosyl-L-homocysteine + H(+). Functionally, specifically methylates the uridine in position 2552 of 23S rRNA at the 2'-O position of the ribose in the fully assembled 50S ribosomal subunit. This chain is Ribosomal RNA large subunit methyltransferase E, found in Paraburkholderia phymatum (strain DSM 17167 / CIP 108236 / LMG 21445 / STM815) (Burkholderia phymatum).